A 135-amino-acid polypeptide reads, in one-letter code: Envelope glycoprotein N (135 aa).

The N-terminal stretch at 1-19 (MEWNTLVLGLLVLSVVASS) is a signal peptide. Over 20–98 (NNTSTASTPR…SHMYELSLSS (79 aa)) the chain is Virion surface. A compositionally biased stretch (low complexity) spans 21–68 (NTSTASTPRPSSSTHASTTVKATTVATTSTTTATSTSSTTSAKPGSTT). A disordered region spans residues 21–73 (NTSTASTPRPSSSTHASTTVKATTVATTSTTTATSTSSTTSAKPGSTTHDPNV). The chain crosses the membrane as a helical span at residues 99–119 (FAAWWTMLNALILMGAFCIVL). Topologically, residues 120–135 (RHCCFQNFTATTTKGY) are intravirion.

This sequence belongs to the herpesviridae glycoprotein N family. In terms of assembly, interacts (via N-terminus) with gM (via N-terminus). The gM-gN heterodimer forms the gCII complex. In terms of processing, O-glycosylated.

It is found in the virion membrane. The protein localises to the host membrane. The protein resides in the host Golgi apparatus. It localises to the host trans-Golgi network. In terms of biological role, envelope glycoprotein necessary for proper maturation of gM and modulation of its membrane fusion activity. Also plays a critical role in virion morphogenesis. The protein is Envelope glycoprotein N of Homo sapiens (Human).